The chain runs to 108 residues: Large ribosomal subunit protein P1B (108 aa).

The segment covering 72–84 (AGSASGAAAGGEA) has biased composition (low complexity). The segment at 72 to 108 (AGSASGAAAGGEAAAEEAAEEEAAEESDDDMGFGLFD) is disordered. The span at 85-102 (AAEEAAEEEAAEESDDDM) shows a compositional bias: acidic residues.

Belongs to the eukaryotic ribosomal protein P1/P2 family. P1 and P2 exist as dimers at the large ribosomal subunit. In terms of processing, phosphorylated.

Functionally, plays an important role in the elongation step of protein synthesis. This Candida albicans (Yeast) protein is Large ribosomal subunit protein P1B (RPP1B).